Consider the following 374-residue polypeptide: Fasciclin-like arabinogalactan protein CTB11 (374 aa).

An N-terminal signal peptide occupies residues 1–18 (MHFPALAVAGCLLSRATA). 2 consecutive FAS1 domains span residues 19 to 171 (QSLD…DANM) and 173 to 302 (LPHN…DGAL). N-linked (GlcNAc...) asparagine glycosylation is found at asparagine 52, asparagine 72, asparagine 120, asparagine 132, and asparagine 176. A helical membrane pass occupies residues 328–348 (ILASHQLTLLAVLAMALVSIL).

The protein belongs to the fasciclin-like AGP family.

It localises to the membrane. Its pathway is mycotoxin biosynthesis. In terms of biological role, fasciclin-like arabinogalactan protein; part of the gene cluster that mediates the biosynthesis of cercosporin, a light-activated, non-host-selective toxin. The perylenequinone chromophore of cercosporin absorbs light energy to attain an electronically-activated triplet state and produces active oxygen species such as the hydroxyl radical, superoxide, hydrogen peroxide or singlet oxygen upon reaction with oxygen molecules. These reactive oxygen species cause damage to various cellular components including lipids, proteins and nucleic acids. The first step of cercosporin biosynthesis is performed by the polyketide synthase CTB1 which catalyzes the formation of nor-toralactone. The starter unit acyltransferase (SAT) domain of CTB1 initiates polyketide extension by the selective utilization of acetyl-CoA, which is elongated to the heptaketide in the beta-ketoacyl synthase (KS) domain by successive condensations with six malonyl units introduced by the malonyl acyltransferase (MAT) domain. The product template (PT) domain catalyzes C4-C9 and C2-C11 aldol cyclizations and dehydrations to a trihydroxynaphthalene, which is thought to be delivered to the thioesterase (TE) domain for product release. The bifunctional enzyme CTB3 then methylates nor-toralactone to toralactone before conducting an unusual oxidative aromatic ring opening. The O-methyltransferase CTB2 further methylates the nascent OH-6 of the CBT3 product, blocking further oxidation at this site before the reductase CTB6 reduces the 2-oxopropyl ketone at position C7, giving naphthalene. The FAD-dependent monooxygenase CTB5 in concert with the multicopper oxidase CTB12 are responsible for homodimerization of naphthalene with CTB7 installing the dioxepine moiety, finally producing cercosporin. The fasciclin domain-containing protein CTB11 might act with CTB5 and CTB12 whereas the roles of CTB9 and CTB10 have still to be elucidated. The chain is Fasciclin-like arabinogalactan protein CTB11 from Cercospora beticola (Sugarbeet leaf spot fungus).